The chain runs to 297 residues: Aspartate carbamoyltransferase catalytic subunit (297 aa).

Carbamoyl phosphate contacts are provided by R48 and T49. Residue K76 coordinates L-aspartate. Carbamoyl phosphate-binding residues include R98, H129, and Q132. The L-aspartate site is built by R162 and R214. Carbamoyl phosphate-binding residues include A257 and P258.

It belongs to the aspartate/ornithine carbamoyltransferase superfamily. ATCase family. As to quaternary structure, heterododecamer (2C3:3R2) of six catalytic PyrB chains organized as two trimers (C3), and six regulatory PyrI chains organized as three dimers (R2).

The catalysed reaction is carbamoyl phosphate + L-aspartate = N-carbamoyl-L-aspartate + phosphate + H(+). Its pathway is pyrimidine metabolism; UMP biosynthesis via de novo pathway; (S)-dihydroorotate from bicarbonate: step 2/3. Functionally, catalyzes the condensation of carbamoyl phosphate and aspartate to form carbamoyl aspartate and inorganic phosphate, the committed step in the de novo pyrimidine nucleotide biosynthesis pathway. This Leuconostoc mesenteroides subsp. mesenteroides (strain ATCC 8293 / DSM 20343 / BCRC 11652 / CCM 1803 / JCM 6124 / NCDO 523 / NBRC 100496 / NCIMB 8023 / NCTC 12954 / NRRL B-1118 / 37Y) protein is Aspartate carbamoyltransferase catalytic subunit.